The following is a 460-amino-acid chain: Sorting nexin-4 (460 aa).

Polar residues predominate over residues 1-16 (MTATEQQQDDFSNVSW). A disordered region spans residues 1 to 53 (MTATEQQQDDFSNVSWSEHVHDQQTRSVPDAEEPGHDMNAPGTGLERDAPSLG). Positions 56 to 178 (KLECTVDTPI…TFLESPDWNA (123 aa)) constitute a PX domain. Coiled coils occupy residues 238–266 (EKVIARVARREADLEVDLRDLAEQFQKLI), 306–337 (RDMQAYSIALKNLLKAREQKQLDYEQLTEYLN), and 374–403 (QARRERTRKLELRVEELTHEVESARKTSDM).

Belongs to the sorting nexin family. Forms a complex with ATG20 and ATG17.

Its subcellular location is the cytoplasm. It localises to the membrane. The protein localises to the endosome membrane. Its function is as follows. Sorting nexin involved in the separation or division of vacuoles throughout the entire life cycle of the cells. Involved in retrieval of late-Golgi SNAREs from post-Golgi endosomes to the trans-Golgi network, for cytoplasm to vacuole transport (Cvt), and autophagy of large cargos including mitophagy, pexophagy and glycophagy. Autophagy is required for proper vegetative growth, asexual/sexual reproduction, and full virulence. Autophagy is particularly involved in the biosynthesis of deoxynivalenol (DON), an important virulence determinant. This Gibberella zeae (strain ATCC MYA-4620 / CBS 123657 / FGSC 9075 / NRRL 31084 / PH-1) (Wheat head blight fungus) protein is Sorting nexin-4.